The chain runs to 859 residues: Linoleate 9S-lipoxygenase 1 (859 aa).

The 141-residue stretch at 21–161 folds into the PLAT domain; sequence VKGTVVLMKK…HYTTDRVFFS (141 aa). Residues 164-859 enclose the Lipoxygenase domain; it reads TYLPHETPAT…GRGIPNSVSI (696 aa). A disordered region spans residues 213–246; that stretch reads KNPRPVLGGTQEYPYPRRGRTGRKPTKEDPQTES. Residues His-519, His-524, His-711, Asn-715, and Ile-859 each contribute to the Fe cation site.

Belongs to the lipoxygenase family. As to quaternary structure, monomer. Requires Fe cation as cofactor. Seedlings, roots, leaves, and flowers (at protein level). Expressed in guard cells.

It localises to the cytoplasm. It catalyses the reaction (9Z,12Z)-octadecadienoate + O2 = (9S)-hydroperoxy-(10E,12Z)-octadecadienoate. The enzyme catalyses (9Z,12Z,15Z)-octadecatrienoate + O2 = (9S)-hydroperoxy-(10E,12Z,15Z)-octadecatrienoate. It functions in the pathway lipid metabolism; oxylipin biosynthesis. Functionally, 9S-lipoxygenase that can use linoleic acid or linolenic acid as substrates. Plant lipoxygenases may be involved in a number of diverse aspects of plant physiology including growth and development, pest resistance, and senescence or responses to wounding. Catalyzes the hydroperoxidation of lipids containing a cis,cis-1,4-pentadiene structure. Function as regulators of root development by controlling the emergence of lateral roots. 9S-lypoxygenase-derived oxylipins may play an antagonistic role to ethylene signaling in the control of responses involving oxidative stress, lipid peroxidation and plant defense. LOX1-derived oxylipins may be involved in stress signaling from roots to shoots in response to cadmium exposure. 9S-lypoxygenase-derived oxylipins are engaged during infection to control the balance between salicylic acid (SA) and jasmonate (JA) signaling to facilitate infection by the fungal pathogen Fusarium graminearum. 9S-lypoxygenase-derived oxylipins activate brassinosteroid signaling to promote cell wall-based defense and limit pathogen infection. The LOX1-derived compound (9S)-hydroperoxy-(10E,12Z,15Z)-octadecatrienoate protects plant tissues against infection by the bacterial pathogen Pseudomonas syringae pv tomato DC3000. The LOX1-derived oxylipins are required to trigger stomatal closure in response to both infection by the bacterial pathogen Pseudomonas syringae pv tomato DC3000, and the pathogen-associated molecular pattern (PAMP) flagellin peptide flg22. Contributes to the oxidation of free fatty acids during seed aging. The chain is Linoleate 9S-lipoxygenase 1 from Arabidopsis thaliana (Mouse-ear cress).